Reading from the N-terminus, the 172-residue chain is MTEAVSNFEAPPMSRRVLLNALLSGSVGVVVVGALYPVVKYFIPPSAGGGGEGLIAQDALGKPISVSELLATHAATDRVLAQGLKGDPTYIVIDNGAVANYGLNAVCTHLGCVVPWNVGENLFKCPCHGSQYAANGKVIRGPAPRSLELVSATVDGDNVRFSPWQGPDFRET.

A helical transmembrane segment spans residues 19-39 (LNALLSGSVGVVVVGALYPVV). One can recognise a Rieske domain in the interval 61-161 (GKPISVSELL…ATVDGDNVRF (101 aa)). [2Fe-2S] cluster is bound by residues cysteine 107, histidine 109, cysteine 125, and histidine 128. Residues cysteine 112 and cysteine 127 are joined by a disulfide bond.

The protein belongs to the Rieske iron-sulfur protein family. The 4 large subunits of the cytochrome b6-f complex are cytochrome b6, subunit IV (17 kDa polypeptide, PetD), cytochrome f and the Rieske protein, while the 4 small subunits are PetG, PetL, PetM and PetN. The complex functions as a dimer. Requires [2Fe-2S] cluster as cofactor.

It localises to the cellular thylakoid membrane. It catalyses the reaction 2 oxidized [plastocyanin] + a plastoquinol + 2 H(+)(in) = 2 reduced [plastocyanin] + a plastoquinone + 4 H(+)(out). In terms of biological role, component of the cytochrome b6-f complex, which mediates electron transfer between photosystem II (PSII) and photosystem I (PSI), cyclic electron flow around PSI, and state transitions. The protein is Cytochrome b6-f complex iron-sulfur subunit of Synechococcus sp. (strain JA-2-3B'a(2-13)) (Cyanobacteria bacterium Yellowstone B-Prime).